Consider the following 75-residue polypeptide: Small ribosomal subunit protein bS18 (75 aa).

This sequence belongs to the bacterial ribosomal protein bS18 family. As to quaternary structure, part of the 30S ribosomal subunit. Forms a tight heterodimer with protein bS6.

Binds as a heterodimer with protein bS6 to the central domain of the 16S rRNA, where it helps stabilize the platform of the 30S subunit. The sequence is that of Small ribosomal subunit protein bS18 from Hydrogenovibrio crunogenus (strain DSM 25203 / XCL-2) (Thiomicrospira crunogena).